Here is a 267-residue protein sequence, read N- to C-terminus: Energy-coupling factor transporter transmembrane protein EcfT (267 aa).

5 consecutive transmembrane segments (helical) span residues 30–50 (FWYV…LLVA), 67–87 (WAGL…QVLF), 110–130 (ALVI…LTAT), 152–172 (VPVN…PTIM), and 247–267 (SIAL…RILL).

Belongs to the energy-coupling factor EcfT family. As to quaternary structure, forms a stable energy-coupling factor (ECF) transporter complex composed of 2 membrane-embedded substrate-binding proteins (S component), 2 ATP-binding proteins (A component) and 2 transmembrane proteins (T component). May be able to interact with more than 1 S component at a time.

Its subcellular location is the cell membrane. Functionally, transmembrane (T) component of an energy-coupling factor (ECF) ABC-transporter complex. Unlike classic ABC transporters this ECF transporter provides the energy necessary to transport a number of different substrates. This Limosilactobacillus fermentum (strain CECT 5716 / Lc40) (Lactobacillus fermentum) protein is Energy-coupling factor transporter transmembrane protein EcfT.